A 361-amino-acid polypeptide reads, in one-letter code: Peptide chain release factor 1 (361 aa).

Gln237 carries the post-translational modification N5-methylglutamine. A compositionally biased stretch (basic and acidic residues) spans 284-296 (EDEKRRSEEDSTR). Residues 284–305 (EDEKRRSEEDSTRRNLVSSGDR) form a disordered region.

The protein belongs to the prokaryotic/mitochondrial release factor family. Post-translationally, methylated by PrmC. Methylation increases the termination efficiency of RF1.

Its subcellular location is the cytoplasm. Peptide chain release factor 1 directs the termination of translation in response to the peptide chain termination codons UAG and UAA. This Shewanella piezotolerans (strain WP3 / JCM 13877) protein is Peptide chain release factor 1.